The chain runs to 145 residues: Ribonuclease H (145 aa).

One can recognise an RNase H type-1 domain in the interval 2–143 (SKKEVIIYTD…ADSLARKAII (142 aa)). Mg(2+) contacts are provided by D11, E49, D71, and D135.

It belongs to the RNase H family. As to quaternary structure, monomer. Mg(2+) is required as a cofactor.

The protein localises to the cytoplasm. It carries out the reaction Endonucleolytic cleavage to 5'-phosphomonoester.. Functionally, endonuclease that specifically degrades the RNA of RNA-DNA hybrids. The sequence is that of Ribonuclease H from Wolbachia pipientis wMel.